The following is a 316-amino-acid chain: tRNA-cytidine(32) 2-sulfurtransferase (316 aa).

The PP-loop motif signature appears at 45 to 50; it reads SGGKDS. 3 residues coordinate [4Fe-4S] cluster: cysteine 120, cysteine 123, and cysteine 211.

The protein belongs to the TtcA family. As to quaternary structure, homodimer. The cofactor is Mg(2+). It depends on [4Fe-4S] cluster as a cofactor.

The protein localises to the cytoplasm. The catalysed reaction is cytidine(32) in tRNA + S-sulfanyl-L-cysteinyl-[cysteine desulfurase] + AH2 + ATP = 2-thiocytidine(32) in tRNA + L-cysteinyl-[cysteine desulfurase] + A + AMP + diphosphate + H(+). It participates in tRNA modification. Catalyzes the ATP-dependent 2-thiolation of cytidine in position 32 of tRNA, to form 2-thiocytidine (s(2)C32). The sulfur atoms are provided by the cysteine/cysteine desulfurase (IscS) system. This chain is tRNA-cytidine(32) 2-sulfurtransferase, found in Shewanella sediminis (strain HAW-EB3).